The chain runs to 212 residues: Thymidylate kinase (212 aa).

Position 10 to 17 (10 to 17 (GPDGAGKT)) interacts with ATP.

The protein belongs to the thymidylate kinase family.

The enzyme catalyses dTMP + ATP = dTDP + ADP. Functionally, phosphorylation of dTMP to form dTDP in both de novo and salvage pathways of dTTP synthesis. This Exiguobacterium sibiricum (strain DSM 17290 / CCUG 55495 / CIP 109462 / JCM 13490 / 255-15) protein is Thymidylate kinase.